An 82-amino-acid polypeptide reads, in one-letter code: Transcription elongation factor 1 homolog (82 aa).

Cysteine 26, cysteine 29, cysteine 50, and cysteine 53 together coordinate Zn(2+).

It belongs to the ELOF1 family.

It is found in the nucleus. In terms of biological role, transcription elongation factor implicated in the maintenance of proper chromatin structure in actively transcribed regions. This Manduca sexta (Tobacco hawkmoth) protein is Transcription elongation factor 1 homolog.